A 317-amino-acid polypeptide reads, in one-letter code: Melanocyte-stimulating hormone receptor (317 aa).

The Extracellular segment spans residues 1–37 (MAVQGSQRRLLGSLNSTPTAIPQLGLAANQTGARCLE). N29 carries an N-linked (GlcNAc...) asparagine glycan. The chain crosses the membrane as a helical span at residues 38-63 (VSIPDGLFLSLGLVSLVENMLVVATI). Topologically, residues 64 to 72 (AKNRNLHSP) are cytoplasmic. Residues 73–93 (MYCFICCLALSDLLVSGSNVL) traverse the membrane as a helical segment. Topologically, residues 94-118 (ETAVILLLEAGALVARAAVLQQVDN) are extracellular. A helical transmembrane segment spans residues 119–140 (VIDVITCSSMLSSLCFLGAIAV). Residues 141 to 163 (DRYISIFYALRYHSIVTLPRARR) are Cytoplasmic-facing. Residues 164 to 183 (AIAAIWVASVLFSTLFIAYC) traverse the membrane as a helical segment. Residues 184 to 191 (DHTAVLLC) lie on the Extracellular side of the membrane. A helical transmembrane segment spans residues 192-211 (LVVFFLAVLVLMAVLYVHML). Residues 212–240 (ARACQHAQGIARLHKRQRPVHQGFGLKGA) lie on the Cytoplasmic side of the membrane. A helical transmembrane segment spans residues 241 to 266 (VTLTILLGIFFLCWGPFFLHLTLIVL). Residues 267 to 279 (CPEHPTCGCIFKN) are Extracellular-facing. A helical transmembrane segment spans residues 280–300 (FNLFLALIICNAIIDPLIYAF). Topologically, residues 301–317 (HSQELRRTLKEVLTCSW) are cytoplasmic. A lipid anchor (S-palmitoyl cysteine) is attached at C315.

It belongs to the G-protein coupled receptor 1 family. Interacts with MGRN1, but does not undergo MGRN1-mediated ubiquitination; this interaction competes with GNAS-binding and thus inhibits agonist-induced cAMP production. Interacts with OPN3; the interaction results in a decrease in MC1R-mediated cAMP signaling and ultimately a decrease in melanin production in melanocytes.

It is found in the cell membrane. Receptor for MSH (alpha, beta and gamma) and ACTH. The activity of this receptor is mediated by G proteins which activate adenylate cyclase. Mediates melanogenesis, the production of eumelanin (black/brown) and phaeomelanin (red/yellow), via regulation of cAMP signaling in melanocytes. The polypeptide is Melanocyte-stimulating hormone receptor (MC1R) (Pan troglodytes (Chimpanzee)).